The following is a 312-amino-acid chain: L-lactate dehydrogenase (312 aa).

NAD(+) is bound by residues valine 11, aspartate 32, arginine 37, and 76–77; that span reads GA. Residues glutamine 79, arginine 85, and 117 to 120 each bind substrate; that span reads NPVD. NAD(+) contacts are provided by residues 115–117 and threonine 140; that span reads VSN. 145–148 is a binding site for substrate; that stretch reads DTAR. Positions 150 and 165 each coordinate beta-D-fructose 1,6-bisphosphate. The active-site Proton acceptor is histidine 172. Tyrosine 217 carries the phosphotyrosine modification. Residue threonine 226 participates in substrate binding.

It belongs to the LDH/MDH superfamily. LDH family. In terms of assembly, homotetramer.

It is found in the cytoplasm. The catalysed reaction is (S)-lactate + NAD(+) = pyruvate + NADH + H(+). It functions in the pathway fermentation; pyruvate fermentation to lactate; (S)-lactate from pyruvate: step 1/1. With respect to regulation, allosterically activated by fructose 1,6-bisphosphate (FBP). Catalyzes the conversion of lactate to pyruvate. This Pseudothermotoga lettingae (strain ATCC BAA-301 / DSM 14385 / NBRC 107922 / TMO) (Thermotoga lettingae) protein is L-lactate dehydrogenase.